We begin with the raw amino-acid sequence, 445 residues long: Plasmid recombination enzyme (445 aa).

DNA-binding residues include Tyr-45 and Tyr-113.

It belongs to the plasmid mobilization pre family.

The sequence is that of Plasmid recombination enzyme from Bacillus thuringiensis.